The sequence spans 717 residues: Asp/Glu-specific dipeptidyl-peptidase (717 aa).

Residues 1-21 (MNKRFFPTLLLAFVCSTLAYA) form the signal peptide. Active-site charge relay system residues include histidine 85, aspartate 226, and serine 652.

Belongs to the peptidase S46 family.

Its subcellular location is the secreted. It localises to the cell surface. Enzyme activity is completely blocked by diisopropyl-fluorophosphates, moderately by phenylmethylsulfonyl fluoride (PMSF) and 4-(2-methyl)benzenesulfonyl fluoride, and slightly by pepstatin in vitro. In terms of biological role, catalyzes the removal of dipeptides from the N-terminus of oligopeptides. Shows a strict specificity for acidic residues (Asp or Glu) in the P1 position, and has a hydrophobic residue preference at the P2 position. Is likely involved in amino acid metabolism and bacterial growth/survival of asaccharolytic P.endodontalis, that utilizes amino acids from extracellular proteinaceous nutrients as energy and carbon sources. The chain is Asp/Glu-specific dipeptidyl-peptidase (dpp11) from Porphyromonas endodontalis (strain ATCC 35406 / DSM 24491 / JCM 8526 / CCUG 16442 / BCRC 14492 / NCTC 13058 / HG 370) (Bacteroides endodontalis).